A 111-amino-acid polypeptide reads, in one-letter code: Cytochrome b-c1 complex subunit 7 (111 aa).

Ala2 carries the N-acetylalanine modification. N6-acetyllysine; alternate is present on Lys12. N6-succinyllysine; alternate is present on Lys12. Residue Lys19 is modified to N6-acetyllysine. At Lys78 the chain carries N6-acetyllysine; alternate. Lys78 is subject to N6-succinyllysine; alternate. Lys83 and Lys96 each carry N6-acetyllysine.

This sequence belongs to the UQCRB/QCR7 family. As to quaternary structure, component of the ubiquinol-cytochrome c oxidoreductase (cytochrome b-c1 complex, complex III, CIII), a multisubunit enzyme composed of 11 subunits. The complex is composed of 3 respiratory subunits cytochrome b, cytochrome c1 and Rieske protein UQCRFS1, 2 core protein subunits UQCRC1/QCR1 and UQCRC2/QCR2, and 6 low-molecular weight protein subunits UQCRH/QCR6, UQCRB/QCR7, UQCRQ/QCR8, UQCR10/QCR9, UQCR11/QCR10 and subunit 9, the cleavage product of Rieske protein UQCRFS1. The complex exists as an obligatory dimer and forms supercomplexes (SCs) in the inner mitochondrial membrane with NADH-ubiquinone oxidoreductase (complex I, CI) and cytochrome c oxidase (complex IV, CIV), resulting in different assemblies (supercomplex SCI(1)III(2)IV(1) and megacomplex MCI(2)III(2)IV(2)).

It localises to the mitochondrion inner membrane. In terms of biological role, component of the ubiquinol-cytochrome c oxidoreductase, a multisubunit transmembrane complex that is part of the mitochondrial electron transport chain which drives oxidative phosphorylation. The respiratory chain contains 3 multisubunit complexes succinate dehydrogenase (complex II, CII), ubiquinol-cytochrome c oxidoreductase (cytochrome b-c1 complex, complex III, CIII) and cytochrome c oxidase (complex IV, CIV), that cooperate to transfer electrons derived from NADH and succinate to molecular oxygen, creating an electrochemical gradient over the inner membrane that drives transmembrane transport and the ATP synthase. The cytochrome b-c1 complex catalyzes electron transfer from ubiquinol to cytochrome c, linking this redox reaction to translocation of protons across the mitochondrial inner membrane, with protons being carried across the membrane as hydrogens on the quinol. In the process called Q cycle, 2 protons are consumed from the matrix, 4 protons are released into the intermembrane space and 2 electrons are passed to cytochrome c. The polypeptide is Cytochrome b-c1 complex subunit 7 (UQCRB) (Homo sapiens (Human)).